The sequence spans 367 residues: Cytochrome b (367 aa).

4 helical membrane passes run 20-40, 64-85, 101-121, and 166-186; these read MGSILGMILGLQLLTGILLSM, WFLRLLHANGASLFFLFMYAHI, WMVGVTIFLVSMATAFLGYVL, and FFSLHFLLPFLISGLALLHII. 2 residues coordinate heme b: H70 and H84. The heme b site is built by H170 and H184. Residue H189 participates in a ubiquinone binding. 4 helical membrane passes run 214-234, 276-296, 308-328, and 335-355; these read IKDSVGFLMVFGVLLMITFFS, LGGVVALLMSILILYFLPLSS, IYQVLFWILVVTFIILTWLGA, and YLSLAGPLTLLYFLMFLLLGM.

This sequence belongs to the cytochrome b family. As to quaternary structure, the main subunits of complex b-c1 are: cytochrome b, cytochrome c1 and the Rieske protein. Requires heme b as cofactor.

Its subcellular location is the mitochondrion inner membrane. Component of the ubiquinol-cytochrome c reductase complex (complex III or cytochrome b-c1 complex) that is part of the mitochondrial respiratory chain. The b-c1 complex mediates electron transfer from ubiquinol to cytochrome c. Contributes to the generation of a proton gradient across the mitochondrial membrane that is then used for ATP synthesis. In Albinaria caerulea (Land snail), this protein is Cytochrome b (MT-CYB).